Consider the following 94-residue polypeptide: Protein RnfH (94 aa).

The protein belongs to the UPF0125 (RnfH) family.

The polypeptide is Protein RnfH (Yersinia pestis bv. Antiqua (strain Antiqua)).